A 227-amino-acid chain; its full sequence is ATP synthase F(0) complex subunit a (227 aa).

A run of 6 helical transmembrane segments spans residues 14-34 (LLGIPLIAMAIMIPWLIFPTP), 69-89 (WATILTALMLFLITINLLGLL), 99-119 (LSLNMAFAIPLWLTTVLIGML), 137-157 (LLIPILIIIETISLFIRPLAL), 180-200 (FVLITIMPTVALLTSLILFLL), and 202-222 (ILEVAVAMIQAYVFVLLLSLY).

The protein belongs to the ATPase A chain family. As to quaternary structure, component of the ATP synthase complex composed at least of ATP5F1A/subunit alpha, ATP5F1B/subunit beta, ATP5MC1/subunit c (homooctomer), MT-ATP6/subunit a, MT-ATP8/subunit 8, ATP5ME/subunit e, ATP5MF/subunit f, ATP5MG/subunit g, ATP5MK/subunit k, ATP5MJ/subunit j, ATP5F1C/subunit gamma, ATP5F1D/subunit delta, ATP5F1E/subunit epsilon, ATP5PF/subunit F6, ATP5PB/subunit b, ATP5PD/subunit d, ATP5PO/subunit OSCP. ATP synthase complex consists of a soluble F(1) head domain (subunits alpha(3) and beta(3)) - the catalytic core - and a membrane F(0) domain - the membrane proton channel (subunits c, a, 8, e, f, g, k and j). These two domains are linked by a central stalk (subunits gamma, delta, and epsilon) rotating inside the F1 region and a stationary peripheral stalk (subunits F6, b, d, and OSCP). Interacts with DNAJC30; interaction is direct.

The protein localises to the mitochondrion inner membrane. It carries out the reaction H(+)(in) = H(+)(out). Subunit a, of the mitochondrial membrane ATP synthase complex (F(1)F(0) ATP synthase or Complex V) that produces ATP from ADP in the presence of a proton gradient across the membrane which is generated by electron transport complexes of the respiratory chain. ATP synthase complex consist of a soluble F(1) head domain - the catalytic core - and a membrane F(1) domain - the membrane proton channel. These two domains are linked by a central stalk rotating inside the F(1) region and a stationary peripheral stalk. During catalysis, ATP synthesis in the catalytic domain of F(1) is coupled via a rotary mechanism of the central stalk subunits to proton translocation. With the subunit c (ATP5MC1), forms the proton-conducting channel in the F(0) domain, that contains two crucial half-channels (inlet and outlet) that facilitate proton movement from the mitochondrial intermembrane space (IMS) into the matrix. Protons are taken up via the inlet half-channel and released through the outlet half-channel, following a Grotthuss mechanism. The chain is ATP synthase F(0) complex subunit a from Squalus acanthias (Spiny dogfish).